A 533-amino-acid polypeptide reads, in one-letter code: Apolipoprotein N-acyltransferase (533 aa).

The next 5 helical transmembrane spans lie at 17 to 37 (FFLPLLSGLLLGISFPTWPAV), 72 to 92 (LLFCLIALWWVCLATFVGGIL), 116 to 136 (GFRSALLALPFIWTGWEWAYM), 165 to 185 (GVWGVSFWLLTFNVLVLLLFM), and 190 to 210 (FQVKVGIVMVMLVMIATPLLY). One can recognise a CN hydrolase domain in the interval 232–499 (VQPDIDPHEK…QSVLTADVPL (268 aa)). The active-site Proton acceptor is the Glu274. Lys352 is an active-site residue. The active-site Nucleophile is the Cys410. Residues 510–530 (PDLVPHVCLGIAGVLALVAAV) traverse the membrane as a helical segment.

This sequence belongs to the CN hydrolase family. Apolipoprotein N-acyltransferase subfamily.

The protein resides in the cell inner membrane. It catalyses the reaction N-terminal S-1,2-diacyl-sn-glyceryl-L-cysteinyl-[lipoprotein] + a glycerophospholipid = N-acyl-S-1,2-diacyl-sn-glyceryl-L-cysteinyl-[lipoprotein] + a 2-acyl-sn-glycero-3-phospholipid + H(+). The protein operates within protein modification; lipoprotein biosynthesis (N-acyl transfer). In terms of biological role, catalyzes the phospholipid dependent N-acylation of the N-terminal cysteine of apolipoprotein, the last step in lipoprotein maturation. In Chlorobaculum tepidum (strain ATCC 49652 / DSM 12025 / NBRC 103806 / TLS) (Chlorobium tepidum), this protein is Apolipoprotein N-acyltransferase.